We begin with the raw amino-acid sequence, 336 residues long: Inositol 2-dehydrogenase (336 aa).

It belongs to the Gfo/Idh/MocA family. As to quaternary structure, homotetramer.

It catalyses the reaction myo-inositol + NAD(+) = scyllo-inosose + NADH + H(+). Involved in the oxidation of myo-inositol (MI) to 2-keto-myo-inositol (2KMI or 2-inosose). This chain is Inositol 2-dehydrogenase, found in Pseudomonas fluorescens (strain SBW25).